A 157-amino-acid chain; its full sequence is Transcriptional repressor NrdR (157 aa).

A zinc finger lies at 3-34; sequence CPSCQNTDSRVLESRSADAGKCVRRRRECLNC. The ATP-cone domain maps to 49-139; the sequence is VTVIKRSNAK…VYRQFNGIED (91 aa).

This sequence belongs to the NrdR family. Zn(2+) is required as a cofactor.

In terms of biological role, negatively regulates transcription of bacterial ribonucleotide reductase nrd genes and operons by binding to NrdR-boxes. The sequence is that of Transcriptional repressor NrdR from Prochlorococcus marinus (strain SARG / CCMP1375 / SS120).